We begin with the raw amino-acid sequence, 806 residues long: Polyribonucleotide nucleotidyltransferase (806 aa).

Residues D488 and D494 each coordinate Mg(2+). Positions 555 to 614 (PQIRTVQIPTDKIRDLIGPGGKTIRGIIEATQVKIDVDDTGRVNIASSDEEGLKKALAMI) constitute a KH domain. The 68-residue stretch at 624 to 691 (GKTYLGKVVR…EGNRIKLSRK (68 aa)) folds into the S1 motif domain. The interval 698 to 806 (RQKLGLPEPG…QGGGGNRGPQ (109 aa)) is disordered. The segment covering 704–717 (PEPGAEAPAAAEGQ) has biased composition (low complexity). Over residues 738–757 (GGEDFDDFDEEGGEGEGEDE) the composition is skewed to acidic residues. The span at 758-774 (NFNREDTPNSAPGERRP) shows a compositional bias: basic and acidic residues. Over residues 783–792 (RGRRRRRGRG) the composition is skewed to basic residues. The segment covering 793–806 (RGPGQGGGGNRGPQ) has biased composition (gly residues).

This sequence belongs to the polyribonucleotide nucleotidyltransferase family. The cofactor is Mg(2+).

Its subcellular location is the cytoplasm. The catalysed reaction is RNA(n+1) + phosphate = RNA(n) + a ribonucleoside 5'-diphosphate. Its function is as follows. Involved in mRNA degradation. Catalyzes the phosphorolysis of single-stranded polyribonucleotides processively in the 3'- to 5'-direction. The chain is Polyribonucleotide nucleotidyltransferase from Acidobacterium capsulatum (strain ATCC 51196 / DSM 11244 / BCRC 80197 / JCM 7670 / NBRC 15755 / NCIMB 13165 / 161).